The following is a 634-amino-acid chain: tRNA uridine 5-carboxymethylaminomethyl modification enzyme MnmG (634 aa).

14-19 (GGGHAG) contacts FAD. Position 279-293 (279-293 (GPRYCPSIEDKVVRF)) interacts with NAD(+).

It belongs to the MnmG family. As to quaternary structure, homodimer. Heterotetramer of two MnmE and two MnmG subunits. It depends on FAD as a cofactor.

The protein localises to the cytoplasm. Its function is as follows. NAD-binding protein involved in the addition of a carboxymethylaminomethyl (cmnm) group at the wobble position (U34) of certain tRNAs, forming tRNA-cmnm(5)s(2)U34. The sequence is that of tRNA uridine 5-carboxymethylaminomethyl modification enzyme MnmG from Xanthomonas campestris pv. campestris (strain 8004).